A 193-amino-acid polypeptide reads, in one-letter code: Adenylate kinase (193 aa).

10 to 18 (GVPGVGGTT) is an ATP binding site.

It belongs to the archaeal adenylate kinase family. As to quaternary structure, monomer.

It localises to the cytoplasm. The enzyme catalyses AMP + ATP = 2 ADP. In Methanococcus aeolicus (strain ATCC BAA-1280 / DSM 17508 / OCM 812 / Nankai-3), this protein is Adenylate kinase.